The chain runs to 208 residues: Imidazoleglycerol-phosphate dehydratase (208 aa).

The protein belongs to the imidazoleglycerol-phosphate dehydratase family.

The protein resides in the cytoplasm. The enzyme catalyses D-erythro-1-(imidazol-4-yl)glycerol 3-phosphate = 3-(imidazol-4-yl)-2-oxopropyl phosphate + H2O. Its pathway is amino-acid biosynthesis; L-histidine biosynthesis; L-histidine from 5-phospho-alpha-D-ribose 1-diphosphate: step 6/9. The chain is Imidazoleglycerol-phosphate dehydratase from Prochlorococcus marinus (strain MIT 9211).